Here is a 297-residue protein sequence, read N- to C-terminus: HTH-type transcriptional regulator ArgP (297 aa).

An HTH lysR-type domain is found at 4–60 (PDYRTLQALDAVIRERGFERAAQKLCITQSAVSQRIKQLENMFGQPLLVRTVPPRPT). Positions 21–40 (FERAAQKLCITQSAVSQRIK) form a DNA-binding region, H-T-H motif.

It belongs to the LysR transcriptional regulatory family. As to quaternary structure, homodimer.

Its function is as follows. Controls the transcription of genes involved in arginine and lysine metabolism. The sequence is that of HTH-type transcriptional regulator ArgP from Escherichia coli O7:K1 (strain IAI39 / ExPEC).